Consider the following 192-residue polypeptide: Xanthine phosphoribosyltransferase (192 aa).

The xanthine site is built by leucine 20 and asparagine 27. 128–132 contributes to the 5-phospho-alpha-D-ribose 1-diphosphate binding site; sequence ADGEA. Xanthine is bound at residue lysine 156.

This sequence belongs to the purine/pyrimidine phosphoribosyltransferase family. Xpt subfamily. As to quaternary structure, homodimer.

The protein localises to the cytoplasm. The enzyme catalyses XMP + diphosphate = xanthine + 5-phospho-alpha-D-ribose 1-diphosphate. It functions in the pathway purine metabolism; XMP biosynthesis via salvage pathway; XMP from xanthine: step 1/1. Its function is as follows. Converts the preformed base xanthine, a product of nucleic acid breakdown, to xanthosine 5'-monophosphate (XMP), so it can be reused for RNA or DNA synthesis. The polypeptide is Xanthine phosphoribosyltransferase (Agathobacter rectalis (strain ATCC 33656 / DSM 3377 / JCM 17463 / KCTC 5835 / VPI 0990) (Eubacterium rectale)).